The following is a 39-amino-acid chain: Contryphan-Cal2 (39 aa).

The signal sequence occupies residues 1-20; the sequence is MTRTAVLLLTLLFLVAMAAS. A disulfide bridge connects residues Cys-29 and Cys-35.

Expressed by the venom duct.

The protein localises to the secreted. Probable neurotoxin. This Californiconus californicus (California cone) protein is Contryphan-Cal2.